Consider the following 89-residue polypeptide: Small ribosomal subunit protein bS20 (89 aa).

Composition is skewed to basic residues over residues 1 to 10 (MANIKSKIKS) and 17 to 29 (ARKR…SRVK). Residues 1-29 (MANIKSKIKSIKTMEKARKRNSMIKSRVK) are disordered.

The protein belongs to the bacterial ribosomal protein bS20 family.

In terms of biological role, binds directly to 16S ribosomal RNA. The sequence is that of Small ribosomal subunit protein bS20 from Mycoplasmopsis pulmonis (strain UAB CTIP) (Mycoplasma pulmonis).